Here is a 255-residue protein sequence, read N- to C-terminus: Fasciclin-like arabinogalactan protein 14 (255 aa).

The N-terminal stretch at 1–23 (MSSSLTIFFFFFASTFLYTSSNS) is a signal peptide. An FAS1 domain is found at 24-169 (FNITNILNEH…ISVLHISSAI (146 aa)). Residues N25, N99, N125, and N159 are each glycosylated (N-linked (GlcNAc...) asparagine). The tract at residues 179–231 (PTASPLSPVSSPPRPAESPNDDGQDFDEPPSSAPGAAADEPSENAGSANGVSR) is disordered. The segment covering 197–206 (PNDDGQDFDE) has biased composition (acidic residues). Residues 222–231 (NAGSANGVSR) show a composition bias toward polar residues. Residue S225 is the site of GPI-anchor amidated serine attachment. The propeptide at 226-255 (ANGVSRNDSQPAFAFTLLMSFIWWFMARLR) is removed in mature form.

This sequence belongs to the fasciclin-like AGP family.

It is found in the cell membrane. May be a cell surface adhesion protein. In Arabidopsis thaliana (Mouse-ear cress), this protein is Fasciclin-like arabinogalactan protein 14 (FLA14).